The sequence spans 610 residues: Elongation factor 4 (610 aa).

Residues 11-193 (EKIRNFSIIA…QIVEKVPAPS (183 aa)) form the tr-type G domain. Residues 23–28 (DHGKST) and 140–143 (NKID) each bind GTP.

It belongs to the TRAFAC class translation factor GTPase superfamily. Classic translation factor GTPase family. LepA subfamily.

Its subcellular location is the cell membrane. The catalysed reaction is GTP + H2O = GDP + phosphate + H(+). Required for accurate and efficient protein synthesis under certain stress conditions. May act as a fidelity factor of the translation reaction, by catalyzing a one-codon backward translocation of tRNAs on improperly translocated ribosomes. Back-translocation proceeds from a post-translocation (POST) complex to a pre-translocation (PRE) complex, thus giving elongation factor G a second chance to translocate the tRNAs correctly. Binds to ribosomes in a GTP-dependent manner. This chain is Elongation factor 4, found in Streptococcus uberis (strain ATCC BAA-854 / 0140J).